Consider the following 431-residue polypeptide: Serine hydroxymethyltransferase 2 (431 aa).

Residues Leu131 and 135 to 137 (GHL) each bind (6S)-5,6,7,8-tetrahydrofolate. Lys240 carries the N6-(pyridoxal phosphate)lysine modification.

The protein belongs to the SHMT family. In terms of assembly, homodimer. Pyridoxal 5'-phosphate is required as a cofactor.

Its subcellular location is the cytoplasm. It carries out the reaction (6R)-5,10-methylene-5,6,7,8-tetrahydrofolate + glycine + H2O = (6S)-5,6,7,8-tetrahydrofolate + L-serine. Its pathway is one-carbon metabolism; tetrahydrofolate interconversion. The protein operates within amino-acid biosynthesis; glycine biosynthesis; glycine from L-serine: step 1/1. In terms of biological role, catalyzes the reversible interconversion of serine and glycine with tetrahydrofolate (THF) serving as the one-carbon carrier. This reaction serves as the major source of one-carbon groups required for the biosynthesis of purines, thymidylate, methionine, and other important biomolecules. Also exhibits THF-independent aldolase activity toward beta-hydroxyamino acids, producing glycine and aldehydes, via a retro-aldol mechanism. The chain is Serine hydroxymethyltransferase 2 from Vibrio parahaemolyticus serotype O3:K6 (strain RIMD 2210633).